The primary structure comprises 148 residues: uncharacterized protein (148 aa).

The HTH asnC-type domain occupies 4 to 65 (LDRVDMQLVK…IPDIDKLGYM (62 aa)). The segment at residues 23-42 (YRELADILNTTRQRIARRID) is a DNA-binding region (H-T-H motif).

This is an uncharacterized protein from Pyrococcus horikoshii (strain ATCC 700860 / DSM 12428 / JCM 9974 / NBRC 100139 / OT-3).